A 381-amino-acid chain; its full sequence is MSDSKEPSVQQLGLLEEEQLRGLGFRQTRGYKSLAGCLGHGXLVLQLLSFTXLAGLLIQVSKFPSSISQEQSKQDAIYQNLTQLKAAVGELSEKSKLQEIYQELTRLKAAVGELPEKSQQQEIYQELTRLKAAVGELPEKSTQQEIYQELTRLKATIGELPEQSKLQEIHQELTQLKAAVGELPEKSKQQEIYQELTQLKAAVGELPEKSKQQEIYXELTRLKAAVERLCRPCPWEWTFFQGNCYFMSNSQRDWQDSVTACQEVGAQLVVIKSAEEQNFLQLQSSRSNRFAWMGLSDVNQEGTWQWVDGSPLSPSFKHYWNRGEPNNIGEEDCAEFSGNGWNDDKCNHAKFWICKMSAASCSRDEEQFLSPAPATPNPPPA.

At methionine 1–cysteine 37 the chain is on the cytoplasmic side. 3 consecutive short sequence motifs (endocytosis signal) follow at residues leucine 14 to leucine 15, glutamate 16 to glutamate 18, and tyrosine 31 to leucine 34. A helical; Signal-anchor for type II membrane protein transmembrane segment spans residues leucine 38–isoleucine 58. Topologically, residues glutamine 59 to alanine 381 are extracellular. An N-linked (GlcNAc...) asparagine glycan is attached at asparagine 80. Repeat copies occupy residues lysine 96–serine 118, glutamine 119–serine 141, threonine 142–serine 164, lysine 165–serine 187, lysine 188–serine 210, and lysine 211–proline 234. The tract at residues lysine 96–threonine 303 is 6 X approximate tandem repeats. 3 disulfides stabilise this stretch: cysteine 233-cysteine 244, cysteine 261-cysteine 354, and cysteine 333-cysteine 346. The 116-residue stretch at phenylalanine 240–lysine 355 folds into the C-type lectin domain. Positions 324, 326, 328, 331, 342, and 343 each coordinate Ca(2+).

In terms of assembly, homotetramer. Interacts with C1QBP; the interaction is indicative for a C1q:C1QBP:CD209 signaling complex. Interacts with ICAM2 and ICAM3 by binding to mannose-like carbohydrates. Interacts (via C-type lectin domain) with CEACAM1 (via Lewis X moieties); this interaction is regulated by the glycosylation pattern of CEACAM1 on cell types and regulates contact between dendritic cells and neutrophils.

The protein localises to the membrane. In terms of biological role, pathogen-recognition receptor expressed on the surface of immature dendritic cells (DCs) and involved in initiation of primary immune response. Thought to mediate the endocytosis of pathogens which are subsequently degraded in lysosomal compartments. The receptor returns to the cell membrane surface and the pathogen-derived antigens are presented to resting T-cells via MHC class II proteins to initiate the adaptive immune response. Probably recognizes in a calcium-dependent manner high mannose N-linked oligosaccharides in a variety of pathogen antigens. On DCs it is a high affinity receptor for ICAM2 and ICAM3 by binding to mannose-like carbohydrates. May act as a DC rolling receptor that mediates transendothelial migration of DC presursors from blood to tissues by binding endothelial ICAM2. Seems to regulate DC-induced T-cell proliferation by binding to ICAM3 on T-cells in the immunological synapse formed between DC and T-cells. This chain is CD209 antigen (CD209), found in Symphalangus syndactylus (Siamang).